The sequence spans 1679 residues: Protein MLP2 (1679 aa).

Coiled coils occupy residues 32 to 176 (AKFE…KYDT), 233 to 466 (YNKF…RQVK), 516 to 1064 (FSNV…EREL), and 1099 to 1491 (KLVS…ENAG). Short sequence motifs (bipartite nuclear localization signal) lie at residues 417-433 (KRST…KRKQ), 639-655 (RKEL…KKTT), and 1433-1449 (KKEW…RRIK). Disordered regions lie at residues 1495–1521 (FLDN…SERP) and 1632–1679 (DLTN…ASNE). 2 stretches are compositionally biased toward polar residues: residues 1511-1520 (NSPSKGNSER) and 1646-1661 (IGST…TSSD). Ser-1512 carries the phosphoserine modification. Residues 1662 to 1671 (PDTKKVKESP) show a composition bias toward basic and acidic residues. Ser-1670 carries the post-translational modification Phosphoserine.

In terms of assembly, component of the nuclear complex (NPC). NPC constitutes the exclusive means of nucleocytoplasmic transport. NPCs allow the passive diffusion of ions and small molecules and the active, nuclear transport receptor-mediated bidirectional transport of macromolecules such as proteins, RNAs, ribonucleoparticles (RNPs), and ribosomal subunits across the nuclear envelope. Due to its 8-fold rotational symmetry, all subunits are present with 8 copies or multiples thereof. Interacts with NUP60 and NIC96, which tether it to the nuclear pore complex. Component of the spindle pole body core in which it interacts directly with SPC110, SPC42 and SPC29. Also interacts with YKU70 (HDF1) and MLP1.

It localises to the nucleus. It is found in the cytoplasm. The protein localises to the cytoskeleton. Its subcellular location is the microtubule organizing center. The protein resides in the spindle pole body. It localises to the nuclear pore complex. In terms of biological role, together with the closely related MLP1, involved in the structural and functional organization of perinuclear chromatin. MLP1/MLP2 associate with the nuclear pore complex and form filamentous structures along the nuclear periphery. Has a role in the localization of Esc1 to nucleolar regions. Together with MLP1, mediates tethering of the some telomeres to the nuclear periphery, probably mediated by YKU70/YKU80 (HDF1/HDF2) heterodimer and show perinuclear location dependent silencing. MLP1 and MLP2 are involved in telomere length regulation but not silencing or telomere anchoring. Plays a role in the incorporation of components into the spindle pole body. Involved in double-strand break repair, probably also mediated by the YKU70/YKU80 (HDF1/HDF2) heterodimer. In Saccharomyces cerevisiae (strain ATCC 204508 / S288c) (Baker's yeast), this protein is Protein MLP2 (MLP2).